The primary structure comprises 535 residues: Aklavinone 12-hydroxylase RdmE (535 aa).

Residues Leu15, Gly16, Glu35, Gln119, and Leu143 each coordinate FAD. Tyr224 (proton acceptor) is an active-site residue. Asp308 is an FAD binding site. Gly317 contacts aklavinone.

This sequence belongs to the PheA/TfdB FAD monooxygenase family. In terms of assembly, monomer. FAD serves as cofactor.

It carries out the reaction aklavinone + NADPH + O2 + H(+) = epsilon-rhodomycinone + NADP(+) + H2O. Its pathway is antibiotic biosynthesis; daunorubicin biosynthesis. The protein operates within antibiotic biosynthesis; carminomycin biosynthesis. It functions in the pathway antibiotic biosynthesis; rhodomycin biosynthesis. Its activity is regulated as follows. Inhibited by phenylglyoxal and 2,3-butanedione. NADP provides a partial protection against inhibition by phenylglyoxal. Increasing the methanol concentration in the assay causes inhibition of the enzyme. Functionally, involved in the biosynthesis of the anthracyclines carminomycin, rhodomycin and daunorubicin (daunomycin) which are aromatic polyketide antibiotics that exhibit high cytotoxicity and are widely applied in the chemotherapy of a variety of cancers. Catalyzes the incorporation of a hydroxyl group at position C-11 of aklavinone, resulting in epsilon-rhodomycinone. It cannot accept substrates glycosylated at position C-7 and is specific for the C-9R configuration of anthracyclines. It can use both NAD or NADP but it is slowly inactivated in the presence of NADH. The sequence is that of Aklavinone 12-hydroxylase RdmE (rdmE) from Streptomyces purpurascens.